A 194-amino-acid polypeptide reads, in one-letter code: Thymidine kinase (194 aa).

ATP is bound by residues 15-22 (GSMFSGKS) and 88-91 (DEVQ). Residue Glu-89 is the Proton acceptor of the active site. Zn(2+) contacts are provided by Cys-145, Cys-148, Cys-183, and Cys-186.

Belongs to the thymidine kinase family. In terms of assembly, homotetramer.

It is found in the cytoplasm. The enzyme catalyses thymidine + ATP = dTMP + ADP + H(+). In Bacillus cereus (strain AH820), this protein is Thymidine kinase.